A 498-amino-acid polypeptide reads, in one-letter code: MEKWRFDSMLFSGVLEYRCGLSKSINSLGDPIENTSVNEDPIINDMDKDIPSGSDSDNSSYSNVDHLVGVRYIRNFLSDDTFLVRDSNRDSYTIYFDIENQIFEIDNHDSFISEPENSFYSYQNSSYLNNVSKNDDPRYDRYVYDTQYSWNNHINSCIGSYLRYQICIDSDILTSSDNYNDNYIYTYICGERVNSNESESSNIRTGADDSDLTTIRESSNDLDVTQKYRHLWVQCENCYGLNYKRFLKSKMNICEHCGCHLKMSSSDRIELLIDPGTWDPMDEDMVSLDPIEFNSEEEPYKDRIDSYQRKTGLTEAVQTGTGKLNGIPVAIGVMDFQFMGGSMGSVVGEKITRLIEYATNQSLPLILVCASGGARMQEGSLSLMQMAKISSALYDYQSNKKLFYIAILTSPTTGGVTASFGMLGDIIIAEPNAYIAFAGKRVIEQTLNKTVPEGSQVAEYLFHKGLFDPIVPRNPLKGVLSELFQLHAFFPLNQNSIK.

The interval 36-59 (SVNEDPIINDMDKDIPSGSDSDNS) is disordered. Residues 231 to 498 (LWVQCENCYG…FFPLNQNSIK (268 aa)) form the CoA carboxyltransferase N-terminal domain. Residues Cys235, Cys238, Cys254, and Cys257 each coordinate Zn(2+). The segment at 235–257 (CENCYGLNYKRFLKSKMNICEHC) adopts a C4-type zinc-finger fold.

It belongs to the AccD/PCCB family. In terms of assembly, acetyl-CoA carboxylase is a heterohexamer composed of biotin carboxyl carrier protein, biotin carboxylase and 2 subunits each of ACCase subunit alpha and ACCase plastid-coded subunit beta (accD). It depends on Zn(2+) as a cofactor.

The protein resides in the plastid. It is found in the chloroplast stroma. The catalysed reaction is N(6)-carboxybiotinyl-L-lysyl-[protein] + acetyl-CoA = N(6)-biotinyl-L-lysyl-[protein] + malonyl-CoA. The protein operates within lipid metabolism; malonyl-CoA biosynthesis; malonyl-CoA from acetyl-CoA: step 1/1. Component of the acetyl coenzyme A carboxylase (ACC) complex. Biotin carboxylase (BC) catalyzes the carboxylation of biotin on its carrier protein (BCCP) and then the CO(2) group is transferred by the transcarboxylase to acetyl-CoA to form malonyl-CoA. The chain is Acetyl-coenzyme A carboxylase carboxyl transferase subunit beta, chloroplastic from Morus indica (Mulberry).